The following is a 492-amino-acid chain: Glutamyl-tRNA(Gln) amidotransferase subunit A (492 aa).

Catalysis depends on charge relay system residues K78 and S158. The active-site Acyl-ester intermediate is S182.

Belongs to the amidase family. GatA subfamily. Heterotrimer of A, B and C subunits.

It carries out the reaction L-glutamyl-tRNA(Gln) + L-glutamine + ATP + H2O = L-glutaminyl-tRNA(Gln) + L-glutamate + ADP + phosphate + H(+). In terms of biological role, allows the formation of correctly charged Gln-tRNA(Gln) through the transamidation of misacylated Glu-tRNA(Gln) in organisms which lack glutaminyl-tRNA synthetase. The reaction takes place in the presence of glutamine and ATP through an activated gamma-phospho-Glu-tRNA(Gln). The sequence is that of Glutamyl-tRNA(Gln) amidotransferase subunit A from Rickettsia akari (strain Hartford).